Here is a 92-residue protein sequence, read N- to C-terminus: Bombyxin A-3 (92 aa).

A signal peptide spans 1–19 (MKILLAIALMLSTVMWVST). The residue at position 20 (Q20) is a Pyrrolidone carboxylic acid. 3 cysteine pairs are disulfide-bonded: C29–C79, C41–C92, and C78–C83. Positions 50–70 (SDAQYVSYGSAWLMPYSEGRG) are cleaved as a propeptide — c peptide like.

The protein belongs to the insulin family. As to quaternary structure, heterodimer of a B chain and an A chain linked by two disulfide bonds.

The protein resides in the secreted. Functionally, brain peptide responsible for activation of prothoracic glands to produce ecdysone in insects. The protein is Bombyxin A-3 (BBXA3) of Bombyx mori (Silk moth).